The following is a 432-amino-acid chain: Glutamyl-tRNA reductase (432 aa).

Substrate is bound by residues 55–58 (TCNR), Ser-114, 119–121 (ETQ), and Gln-125. Residue Cys-56 is the Nucleophile of the active site. NADP(+) is bound at residue 194 to 199 (GAGEMI).

This sequence belongs to the glutamyl-tRNA reductase family. Homodimer.

The enzyme catalyses (S)-4-amino-5-oxopentanoate + tRNA(Glu) + NADP(+) = L-glutamyl-tRNA(Glu) + NADPH + H(+). It participates in porphyrin-containing compound metabolism; protoporphyrin-IX biosynthesis; 5-aminolevulinate from L-glutamyl-tRNA(Glu): step 1/2. Functionally, catalyzes the NADPH-dependent reduction of glutamyl-tRNA(Glu) to glutamate 1-semialdehyde (GSA). This chain is Glutamyl-tRNA reductase, found in Burkholderia cenocepacia (strain ATCC BAA-245 / DSM 16553 / LMG 16656 / NCTC 13227 / J2315 / CF5610) (Burkholderia cepacia (strain J2315)).